The chain runs to 100 residues: Integration host factor subunit alpha (100 aa).

It belongs to the bacterial histone-like protein family. As to quaternary structure, heterodimer of an alpha and a beta chain.

Its function is as follows. This protein is one of the two subunits of integration host factor, a specific DNA-binding protein that functions in genetic recombination as well as in transcriptional and translational control. The polypeptide is Integration host factor subunit alpha (Ectopseudomonas mendocina (strain ymp) (Pseudomonas mendocina)).